We begin with the raw amino-acid sequence, 65 residues long: Sec-independent protein translocase protein TatA (65 aa).

The chain crosses the membrane as a helical span at residues Ile-9–Gly-29. The interval Ser-43–Glu-65 is disordered. Residues Gly-45–Thr-54 are compositionally biased toward acidic residues. A compositionally biased stretch (basic and acidic residues) spans Lys-55–Glu-65.

It belongs to the TatA/E family. As to quaternary structure, forms a complex with TatC.

The protein localises to the cell membrane. Its function is as follows. Part of the twin-arginine translocation (Tat) system that transports large folded proteins containing a characteristic twin-arginine motif in their signal peptide across membranes. TatA could form the protein-conducting channel of the Tat system. The sequence is that of Sec-independent protein translocase protein TatA from Dehalococcoides mccartyi (strain ATCC BAA-2266 / KCTC 15142 / 195) (Dehalococcoides ethenogenes (strain 195)).